Reading from the N-terminus, the 338-residue chain is Endonuclease V (338 aa).

Residues aspartate 52 and aspartate 126 each coordinate Mg(2+). The segment at 253–338 (QLGVAPAQRK…PSPAWVQSPP (86 aa)) is disordered. 2 stretches are compositionally biased toward basic and acidic residues: residues 260–270 (QRKDRSQKEQR) and 287–323 (RPPECDGRDSSSDRKAPEPGFQEQKDQQLEGTGHQED). Pro residues predominate over residues 328 to 338 (PPSPAWVQSPP).

This sequence belongs to the endonuclease V family. As to quaternary structure, monomer. Interacts with PABPC1; the interaction is RNA-dependent and stimulates ENDOV activity. Requires Mg(2+) as cofactor. Highest levels detected in liver with high levels also found in heart, kidney and testis. Expressed at low levels in brain.

The protein localises to the cytoplasm. The protein resides in the nucleus. Its subcellular location is the nucleolus. It is found in the stress granule. Its function is as follows. Endoribonuclease that specifically cleaves inosine-containing RNAs: cleaves RNA at the second phosphodiester bond 3' to inosine. Active against both single-stranded and double-stranded RNAs. Has strong preference for single-stranded RNAs (ssRNAs) toward double-stranded RNAs (dsRNAs). Cleaves mRNAs and tRNAs containing inosine. Also able to cleave structure-specific dsRNA substrates containing the specific sites 5'-IIUI-3' and 5'-UIUU-3'. Inosine is present in a number of RNAs following editing; the function of inosine-specific endoribonuclease is still unclear: it could either play a regulatory role in edited RNAs, or be involved in antiviral response by removing the hyperedited long viral dsRNA genome that has undergone A-to-I editing. Binds branched DNA structures. In Mus musculus (Mouse), this protein is Endonuclease V (Endov).